The primary structure comprises 167 residues: Early nodulin-like protein 16 (167 aa).

An N-terminal signal peptide occupies residues 1–24; that stretch reads MARVAVLVAGAVLAFLLAATNVTA. One can recognise a Phytocyanin domain in the interval 25-126; the sequence is KRWTVGDNKF…GMKLAVLVEK (102 aa). Asparagine 40, asparagine 71, asparagine 86, and asparagine 99 each carry an N-linked (GlcNAc...) asparagine glycan. Cysteines 78 and 114 form a disulfide. Residue asparagine 138 is the site of GPI-anchor amidated asparagine attachment. Positions 139–167 are cleaved as a propeptide — removed in mature form; that stretch reads SARRTFSVSGFAYQFLIPVAVFAAVGTRY.

It belongs to the early nodulin-like (ENODL) family.

It is found in the cell membrane. Its function is as follows. May act as a carbohydrate transporter. The chain is Early nodulin-like protein 16 from Arabidopsis thaliana (Mouse-ear cress).